The sequence spans 177 residues: MSRIGKKPVAIPTGVTANIADGVLSVKGPKGELSMPLSSEVTYSLEDGQLSVQPVNDTKRARSFWGMQRTLVQNLIDGVTQGYSKTLQITGVGYRAASQGKTLKLQLGYSHDIDFAIPEGITIQTPEPTTVNISGIDKQKVGQVAAEIRRWRRPEPYKGKGIKYAGEFIFRKEGKKK.

The protein belongs to the universal ribosomal protein uL6 family. In terms of assembly, part of the 50S ribosomal subunit.

Functionally, this protein binds to the 23S rRNA, and is important in its secondary structure. It is located near the subunit interface in the base of the L7/L12 stalk, and near the tRNA binding site of the peptidyltransferase center. The chain is Large ribosomal subunit protein uL6 from Zymomonas mobilis subsp. mobilis (strain ATCC 31821 / ZM4 / CP4).